The chain runs to 499 residues: MELSYQEKLTLIKLNELKRAKFEELVKATGLEQVAVMRAVLGLQAKGLAKLHERSEKVVKLTETGKKYAEIGLPEWRALKLLRERGKVTLDDLREVLSDDELKPIVGLLRKEGWASVRKEDGKLILEITEKGLEAEERPIDRALKLLAEKNVVPVKEIEKLIPVKELKRRKIGEEETVTERTVEITPAGEELAPKVELKREVSVLTPELIKSGKWREVEFRRFDIKAPVRRIYPGKKQPYRAFLDKIRRRLIEMGFIEMTVDSLIETQFWNFDALFQPQNHPAREWTDTYQLKYPKSGFLPEEELVERVKTAHERGLAGSRGWGYVWSPERAMLLMPRAHGTALSGRQLAKGVEIPGKYFTIQRVFRPDVLDRTHLIEFNQIDGFVVGEELNFRHLLGILKRFAVEIAGAKKVKFLPDYYPFTEPSVQMSAYHPELGWVEFGGAGIFREEMTKALGIEVPVIAWGIGIDRLAMFKLGIDDIRYLFSYDLRWLREAKLVW.

Residues threonine 342, 381-383 (QID), and phenylalanine 422 each bind L-phenylalanine. Residue glutamate 424 participates in Mg(2+) binding. Residue phenylalanine 447 participates in L-phenylalanine binding.

Belongs to the class-II aminoacyl-tRNA synthetase family. Phe-tRNA synthetase alpha subunit type 2 subfamily. In terms of assembly, tetramer of two alpha and two beta subunits. The cofactor is Mg(2+).

The protein localises to the cytoplasm. It carries out the reaction tRNA(Phe) + L-phenylalanine + ATP = L-phenylalanyl-tRNA(Phe) + AMP + diphosphate + H(+). The polypeptide is Phenylalanine--tRNA ligase alpha subunit (Thermococcus gammatolerans (strain DSM 15229 / JCM 11827 / EJ3)).